Consider the following 699-residue polypeptide: Elongation factor G (699 aa).

The tr-type G domain occupies 8-283 (EHIRNIGICA…AVVDFLPSPI (276 aa)). Residues 17–24 (AHIDAGKT), 81–85 (DTPGH), and 135–138 (NKMD) each bind GTP.

This sequence belongs to the TRAFAC class translation factor GTPase superfamily. Classic translation factor GTPase family. EF-G/EF-2 subfamily.

Its subcellular location is the cytoplasm. In terms of biological role, catalyzes the GTP-dependent ribosomal translocation step during translation elongation. During this step, the ribosome changes from the pre-translocational (PRE) to the post-translocational (POST) state as the newly formed A-site-bound peptidyl-tRNA and P-site-bound deacylated tRNA move to the P and E sites, respectively. Catalyzes the coordinated movement of the two tRNA molecules, the mRNA and conformational changes in the ribosome. In Rickettsia africae (strain ESF-5), this protein is Elongation factor G.